The chain runs to 309 residues: Elongation factor Ts (309 aa).

Positions 82 to 85 (TDFV) are involved in Mg(2+) ion dislocation from EF-Tu.

The protein belongs to the EF-Ts family.

It localises to the cytoplasm. In terms of biological role, associates with the EF-Tu.GDP complex and induces the exchange of GDP to GTP. It remains bound to the aminoacyl-tRNA.EF-Tu.GTP complex up to the GTP hydrolysis stage on the ribosome. The chain is Elongation factor Ts from Rickettsia bellii (strain OSU 85-389).